A 65-amino-acid chain; its full sequence is Large ribosomal subunit protein bL35 (65 aa).

Residues 1–23 (MPKMKTHRGAAKRFKKTGTGKLK) form a disordered region.

This sequence belongs to the bacterial ribosomal protein bL35 family.

The polypeptide is Large ribosomal subunit protein bL35 (Clostridium perfringens (strain ATCC 13124 / DSM 756 / JCM 1290 / NCIMB 6125 / NCTC 8237 / Type A)).